Reading from the N-terminus, the 424-residue chain is Probable ribonuclease FAU-1 (424 aa).

The protein belongs to the FAU-1 family.

Functionally, probable RNase involved in rRNA stability through maturation and/or degradation of precursor rRNAs. Binds to RNA in loop regions with AU-rich sequences. In Saccharolobus islandicus (strain L.S.2.15 / Lassen #1) (Sulfolobus islandicus), this protein is Probable ribonuclease FAU-1.